The sequence spans 464 residues: MAVYNYDVVVLGSGPAGEGAAMNAAKAGRKVAVVDNRPLVGGNCTHLGTIPSKALRHSVRQIMQFNTNPMFRQIGEPRWFSFPDVLKSAEKVIAKQVTSRTGYYARNRIDTYFGTASFADEQTVEVVCLNGVVEKLVAKQIVIATGSRPYRPADVDFRHPRIYDSDTILSLGHTPRRLIIYGAGVIGCEYASIFSGLGVLVDLIDNRDQLLSFLDSEISDALSYHLRNNNVLIRHNEEYERIEGVENGVVLHLKSGKKIKADALLWCNGRTGNTDQLGLENIGIAVNSRGQIQVDEHYRTEVSNIYAAGDVIGWPSLASAAADQGRSAAGSIVENGSWRFVDDVPTGIYTIPEISSIGKTERELTQAKVPYEVGKAFFKGMARAQISVEPVGMLKILFHRETLEVLGVHCFGYQASEIVHIGQAIMNQKGEANSIKYFINTTFNYPTMAEAYRVAAFDGLNRLF.

Residue 35 to 44 (DNRPLVGGNC) coordinates FAD.

The protein belongs to the class-I pyridine nucleotide-disulfide oxidoreductase family. It depends on FAD as a cofactor.

Its subcellular location is the cytoplasm. The catalysed reaction is NAD(+) + NADPH = NADH + NADP(+). In terms of biological role, conversion of NADPH, generated by peripheral catabolic pathways, to NADH, which can enter the respiratory chain for energy generation. The chain is Soluble pyridine nucleotide transhydrogenase from Ectopseudomonas mendocina (strain ymp) (Pseudomonas mendocina).